We begin with the raw amino-acid sequence, 187 residues long: Signal peptidase I U (187 aa).

Residues 1-16 (MNAKTITLKKKRKIKT) lie on the Cytoplasmic side of the membrane. The helical transmembrane segment at 17–37 (IVVLSIIMIAALIFTIRLVFY) threads the bilayer. Over 38–187 (KPFLIEGSSM…YPFGEMRQAK (150 aa)) the chain is Extracellular. Residues Ser46 and Lys88 contribute to the active site.

This sequence belongs to the peptidase S26 family.

Its subcellular location is the cell membrane. It catalyses the reaction Cleavage of hydrophobic, N-terminal signal or leader sequences from secreted and periplasmic proteins.. The chain is Signal peptidase I U (sipU) from Bacillus subtilis (strain 168).